Consider the following 213-residue polypeptide: Probable transaldolase (213 aa).

Lys-83 acts as the Schiff-base intermediate with substrate in catalysis.

It belongs to the transaldolase family. Type 3B subfamily.

Its subcellular location is the cytoplasm. The catalysed reaction is D-sedoheptulose 7-phosphate + D-glyceraldehyde 3-phosphate = D-erythrose 4-phosphate + beta-D-fructose 6-phosphate. It functions in the pathway carbohydrate degradation; pentose phosphate pathway; D-glyceraldehyde 3-phosphate and beta-D-fructose 6-phosphate from D-ribose 5-phosphate and D-xylulose 5-phosphate (non-oxidative stage): step 2/3. Its function is as follows. Transaldolase is important for the balance of metabolites in the pentose-phosphate pathway. The polypeptide is Probable transaldolase (Oceanobacillus iheyensis (strain DSM 14371 / CIP 107618 / JCM 11309 / KCTC 3954 / HTE831)).